The chain runs to 384 residues: 8-amino-7-oxononanoate synthase (384 aa).

Position 21 (Arg-21) interacts with substrate. A pyridoxal 5'-phosphate-binding site is contributed by Gly-108 to Phe-109. His-133 is a substrate binding site. Pyridoxal 5'-phosphate contacts are provided by Ser-179, His-207, and Thr-233. Lys-236 is modified (N6-(pyridoxal phosphate)lysine). Thr-352 contributes to the substrate binding site.

The protein belongs to the class-II pyridoxal-phosphate-dependent aminotransferase family. BioF subfamily. Homodimer. Pyridoxal 5'-phosphate is required as a cofactor.

It catalyses the reaction 6-carboxyhexanoyl-[ACP] + L-alanine + H(+) = (8S)-8-amino-7-oxononanoate + holo-[ACP] + CO2. It functions in the pathway cofactor biosynthesis; biotin biosynthesis. Functionally, catalyzes the decarboxylative condensation of pimeloyl-[acyl-carrier protein] and L-alanine to produce 8-amino-7-oxononanoate (AON), [acyl-carrier protein], and carbon dioxide. This chain is 8-amino-7-oxononanoate synthase, found in Escherichia coli O6:H1 (strain CFT073 / ATCC 700928 / UPEC).